Here is a 124-residue protein sequence, read N- to C-terminus: Small ribosomal subunit protein bS6 (124 aa).

The disordered stretch occupies residues 96-124 (ETGPSPMMKEVQREEAKKAAAAQPTEAQA). The segment covering 114-124 (AAAAQPTEAQA) has biased composition (low complexity).

Belongs to the bacterial ribosomal protein bS6 family.

In terms of biological role, binds together with bS18 to 16S ribosomal RNA. The polypeptide is Small ribosomal subunit protein bS6 (Burkholderia mallei (strain ATCC 23344)).